Consider the following 165-residue polypeptide: Sulfopyruvate decarboxylase subunit alpha (165 aa).

Belongs to the ComD family. In terms of assembly, heterododecamer composed of 6 subunits alpha and 6 subunits beta.

It carries out the reaction 3-sulfopyruvate + H(+) = sulfoacetaldehyde + CO2. It functions in the pathway cofactor biosynthesis; coenzyme M biosynthesis; sulfoacetaldehyde from phosphoenolpyruvate and sulfite: step 4/4. Involved in the biosynthesis of the coenzyme M (2-mercaptoethanesulfonic acid). Catalyzes the decarboxylation of sulfopyruvate to sulfoacetaldehyde. In Methanothermobacter thermautotrophicus (strain ATCC 29096 / DSM 1053 / JCM 10044 / NBRC 100330 / Delta H) (Methanobacterium thermoautotrophicum), this protein is Sulfopyruvate decarboxylase subunit alpha.